The chain runs to 103 residues: Gene 56 protein (103 aa).

In terms of domain architecture, Glutaredoxin spans 9-103; sequence WDGAHVRTLF…DYYTASETGL (95 aa).

This is Gene 56 protein (56) from Mycobacterium phage L5 (Mycobacteriophage L5).